The primary structure comprises 723 residues: CSC1-like protein ERD4 (723 aa).

Topologically, residues Met-1–Ser-5 are cytoplasmic. The helical transmembrane segment at Phe-6 to Trp-26 threads the bilayer. The Extracellular segment spans residues Leu-27–Thr-90. A helical transmembrane segment spans residues Val-91–Ala-111. Topologically, residues Thr-112–Arg-148 are cytoplasmic. Residues Leu-149–Lys-169 traverse the membrane as a helical segment. Residues Ala-170–Gln-364 are Extracellular-facing. The helical transmembrane segment at Tyr-365 to Val-385 threads the bilayer. Residues Ser-386–Ser-416 are Cytoplasmic-facing. Residues Tyr-417–Leu-437 traverse the membrane as a helical segment. Over Ser-438–Lys-456 the chain is Extracellular. A helical transmembrane segment spans residues Tyr-457–Glu-477. Residues Asn-478 to Val-508 lie on the Cytoplasmic side of the membrane. A helical membrane pass occupies residues Ala-509–Phe-529. The Extracellular segment spans residues His-530–Ser-572. The helical transmembrane segment at Val-573 to Leu-593 threads the bilayer. Residues Arg-594 to His-614 lie on the Cytoplasmic side of the membrane. Residues Ile-615–Gly-635 traverse the membrane as a helical segment. At Val-636–Lys-637 the chain is on the extracellular side. The helical transmembrane segment at Ile-638 to Val-658 threads the bilayer. At Cys-659–Ala-723 the chain is on the cytoplasmic side.

The protein belongs to the CSC1 (TC 1.A.17) family.

It localises to the plastid. It is found in the chloroplast membrane. Acts as an osmosensitive calcium-permeable cation channel. The polypeptide is CSC1-like protein ERD4 (ERD4) (Brassica juncea (Indian mustard)).